A 372-amino-acid polypeptide reads, in one-letter code: NAD(P)H-quinone oxidoreductase subunit 1 (372 aa).

Helical transmembrane passes span 27 to 47, 65 to 85, 97 to 117, 128 to 148, 166 to 186, 204 to 224, 266 to 286, 308 to 328, and 347 to 367; these read AIWMPLPMILMLIGATVGVLV, PEYIGPLGLLAPVADGLKLVF, WLFTLGPILVVLPVFLSYLIV, IGTGIFLWIALSSIQPIGLLM, AAQSISYEIPLALSVLAIVMM, ILGWNIWRQPLGFLIFWIAAL, VLSALLVAVLYLGGWDFPIPI, ALGITMTLVKAYFLVFIAILL, and FLLPVGLVNLLLTAALKLAFP.

Belongs to the complex I subunit 1 family. NDH-1 is composed of at least 11 different subunits.

Its subcellular location is the cellular thylakoid membrane. The enzyme catalyses a plastoquinone + NADH + (n+1) H(+)(in) = a plastoquinol + NAD(+) + n H(+)(out). It catalyses the reaction a plastoquinone + NADPH + (n+1) H(+)(in) = a plastoquinol + NADP(+) + n H(+)(out). Its function is as follows. NDH-1 shuttles electrons from an unknown electron donor, via FMN and iron-sulfur (Fe-S) centers, to quinones in the respiratory and/or the photosynthetic chain. The immediate electron acceptor for the enzyme in this species is believed to be plastoquinone. Couples the redox reaction to proton translocation, and thus conserves the redox energy in a proton gradient. This is NAD(P)H-quinone oxidoreductase subunit 1 from Trichormus variabilis (strain ATCC 29413 / PCC 7937) (Anabaena variabilis).